The sequence spans 230 residues: Sugar fermentation stimulation protein homolog (230 aa).

This sequence belongs to the SfsA family.

This Clostridium tetani (strain Massachusetts / E88) protein is Sugar fermentation stimulation protein homolog.